Consider the following 308-residue polypeptide: Rhamnose-binding lectin (308 aa).

A signal peptide spans 1–23 (MMLILKLSLLSLLIATPGLLVSG). 3 consecutive SUEL-type lectin domains span residues 27–115 (ITCY…SFDC), 123–213 (ICEH…YICT), and 218–308 (VCEG…YACV). Asparagine 110 carries N-linked (GlcNAc...) asparagine glycosylation.

In terms of assembly, homotrimer. In terms of tissue distribution, expressed in eggs, but not in liver.

The protein resides in the secreted. Its function is as follows. Lectin that binds L-rhamnose. Also binds monosaccharides possessing steric similarity to the hydroxyl group orientation at C2 and C4 of the pyranose ring structure of L-rhamnose, such as L-mannose and L-lyxose. This chain is Rhamnose-binding lectin, found in Silurus asotus (Amur catfish).